Consider the following 415-residue polypeptide: Peptide chain release factor subunit 1 (415 aa).

The protein belongs to the eukaryotic release factor 1 family. Heterodimer of two subunits, one of which binds GTP.

It localises to the cytoplasm. In terms of biological role, directs the termination of nascent peptide synthesis (translation) in response to the termination codons UAA, UAG and UGA. The sequence is that of Peptide chain release factor subunit 1 from Methanosarcina mazei (strain ATCC BAA-159 / DSM 3647 / Goe1 / Go1 / JCM 11833 / OCM 88) (Methanosarcina frisia).